Here is a 147-residue protein sequence, read N- to C-terminus: Phosphoribosyl-AMP cyclohydrolase (147 aa).

Residue Asp-97 participates in Mg(2+) binding. Cys-98 serves as a coordination point for Zn(2+). Asp-99 and Asp-101 together coordinate Mg(2+). Cys-114 and Cys-121 together coordinate Zn(2+).

Belongs to the PRA-CH family. In terms of assembly, homodimer. Mg(2+) serves as cofactor. It depends on Zn(2+) as a cofactor.

It is found in the cytoplasm. It carries out the reaction 1-(5-phospho-beta-D-ribosyl)-5'-AMP + H2O = 1-(5-phospho-beta-D-ribosyl)-5-[(5-phospho-beta-D-ribosylamino)methylideneamino]imidazole-4-carboxamide. Its pathway is amino-acid biosynthesis; L-histidine biosynthesis; L-histidine from 5-phospho-alpha-D-ribose 1-diphosphate: step 3/9. In terms of biological role, catalyzes the hydrolysis of the adenine ring of phosphoribosyl-AMP. The polypeptide is Phosphoribosyl-AMP cyclohydrolase (Hydrogenovibrio crunogenus (strain DSM 25203 / XCL-2) (Thiomicrospira crunogena)).